A 161-amino-acid chain; its full sequence is Protein-export protein SecB (161 aa).

The protein belongs to the SecB family. In terms of assembly, homotetramer, a dimer of dimers. One homotetramer interacts with 1 SecA dimer.

It is found in the cytoplasm. Functionally, one of the proteins required for the normal export of preproteins out of the cell cytoplasm. It is a molecular chaperone that binds to a subset of precursor proteins, maintaining them in a translocation-competent state. It also specifically binds to its receptor SecA. The protein is Protein-export protein SecB of Shewanella pealeana (strain ATCC 700345 / ANG-SQ1).